Reading from the N-terminus, the 394-residue chain is Elongation factor Tu (394 aa).

Residues 10-204 form the tr-type G domain; it reads KPHVNIGTIG…AVDSYIPQPV (195 aa). The interval 19–26 is G1; sequence GHVDHGKT. 19–26 serves as a coordination point for GTP; the sequence is GHVDHGKT. T26 contacts Mg(2+). Positions 60–64 are G2; it reads GITIS. The tract at residues 81–84 is G3; sequence DCPG. GTP contacts are provided by residues 81–85 and 136–139; these read DCPGH and NKID. The interval 136-139 is G4; it reads NKID. The interval 174–176 is G5; the sequence is SAL.

The protein belongs to the TRAFAC class translation factor GTPase superfamily. Classic translation factor GTPase family. EF-Tu/EF-1A subfamily. In terms of assembly, monomer.

It localises to the cytoplasm. It carries out the reaction GTP + H2O = GDP + phosphate + H(+). GTP hydrolase that promotes the GTP-dependent binding of aminoacyl-tRNA to the A-site of ribosomes during protein biosynthesis. The sequence is that of Elongation factor Tu from Rickettsia rickettsii.